Here is a 64-residue protein sequence, read N- to C-terminus: Large ribosomal subunit protein bL35 (64 aa).

The span at 1–28 (MSKAKTHSGAAKRFKKTASGYKHKHAFK) shows a compositional bias: basic residues. The tract at residues 1 to 51 (MSKAKTHSGAAKRFKKTASGYKHKHAFKSHILTKMTTKRKRQLRGTSLLNA) is disordered.

This sequence belongs to the bacterial ribosomal protein bL35 family.

The sequence is that of Large ribosomal subunit protein bL35 from Saccharophagus degradans (strain 2-40 / ATCC 43961 / DSM 17024).